The sequence spans 185 residues: uncharacterized protein (185 aa).

Residues 1 to 18 form the signal peptide; the sequence is MLLKLILILCFLVTLSLS. The interval 30–185 is disordered; it reads TQGPTIASGG…VQDCGEITGW (156 aa). Over residues 86–101 the composition is skewed to basic and acidic residues; it reads RAQEGGKKDTTKEQPK. Residues 103 to 116 show a composition bias toward low complexity; sequence NNNNKNLGRHSSSG. Residues 117 to 135 show a composition bias toward gly residues; that stretch reads SGSGSGSGCGVTGDTGTGS.

The protein localises to the secreted. This is an uncharacterized protein from Dictyostelium discoideum (Social amoeba).